The following is a 1032-amino-acid chain: MNTTNEYLKTLLNPAQFISDIPDDIMIRHVNSAQTITYNLKSGASGTGLIVVYPNTPSSISGFHYIWDSATSNWVFDQYIYTAQELKDSYDYGRLISGSLSIKSSTLPAGVYALNGTFNAVWFQGTLSEVSDYSYDRILSITSNPLDKVGNVLVGDGIEVLSLPQGFNNPYVRLGDKSPSTLSSPTHITNTSQNLATGGAYMIPVTTVPGQGFHNKEFSINVDSVGPVDILWSGQMTMQDEWTVTANYQPLNISGTLIANSQRTLTWSNTGVSNGSHYMNMNNLNVSLFHENPPPEPVAAIKININYGNNTNGDSSFSVDSSFTINVIGGATIGVNSPTVGVGYQGVAEGTAITISGINNYELVPNPDLQKNLPMTYGTCDPHDLTYIKYILSNREQLGLRSVMTLADYNRMKMYMHVLTNYHVDEREASSFDFWQLLKQIKNVAVPLAATLAPQFAPIIGAADGLANAILGDSASGRPVGNSASGMPISMSRRLRNAYSADSPLGEEHWLPNENENFNKFDIIYDVSHSSMALFPVIMMEHDKVIPSDPEELYIAVSLTESLRKQIPNLNDMPYYEMGGHRVYNSVSSNVRSGNFLRSDYILLPCYQLLEGRLASSTSPNKVTGTSHQLAIYAADDLLKSGVLGKAPFAAFTGSVVGSSVGEVFGINLKLQLTDSLGIPLLGNSPGLVQVKTLTSLDKKIKDMGDVKRRTPKQTLPHWTAGSASMNPFMNTNPFLEELDQPIPSNAAKPISEETRDLFLSDGQTIPSSQEKIATIHEYLLEHKELEEAMFSLISQGRGRSLINMVVKSALNIETQSREVTGERRQRLERKLRNLENQGIYVDESKIMSRGRISKEDTELAMRIARKNQKDAKLRRIYSNNASIQESYTVDDFVSYWMEQESLPTGIQIAMWLKGDDWSQPIPPRVQRRHYDSYIMMLGPSPTQEQADAVKDLVDDIYDRNQGKGPSQEQARELSHAVRRLISHSLVNQPATAPRVPPRRIVSAQTAQTDPPGRRAALDRLRRVRGEDNDIV.

Aspartate 23 contacts a divalent metal cation. One can recognise a Peptidase S50 domain in the interval 501 to 723; it reads ADSPLGEEHW…QTLPHWTAGS (223 aa). Serine 627 functions as the Nucleophile in the catalytic mechanism. Lysine 670 is an active-site residue. Residues 986-1014 are disordered; sequence LVNQPATAPRVPPRRIVSAQTAQTDPPGR. Residues 1021-1030 form an interaction with VP1 protein region; it reads LRRVRGEDND.

Homotrimer. A central divalent metal stabilizes the VP2 trimer. As to quaternary structure, homodimer. Interacts (via C-terminus) with VP1 in the cytoplasm. Capsid VP3 interacts with VP2. In terms of processing, specific enzymatic cleavages yield mature proteins. The capsid assembly seems to be regulated by polyprotein processing. The protease VP4 cleaves itself off the polyprotein, thus releasing pre-VP2 and VP3 within the infected cell. During capsid assembly, the C-terminus of pre-VP2 is further processed by VP4, giving rise to VP2, the external capsid protein and three small peptides that all stay closely associated with the capsid.

The protein resides in the virion. Its subcellular location is the host cytoplasm. Functionally, capsid protein VP2 self assembles to form an icosahedral capsid with a T=13 symmetry, about 70 nm in diameter, and consisting of 260 VP2 trimers. The capsid encapsulates the genomic dsRNA. VP2 is also involved in attachment and entry into the host cell. Its function is as follows. The precursor of VP2 plays an important role in capsid assembly. First, pre-VP2 and VP2 oligomers assemble to form a procapsid. Then, the pre-VP2 intermediates may be processed into VP2 proteins by proteolytic cleavage mediated by VP4 to obtain the mature virion. The final capsid is composed of pentamers and hexamers but VP2 has a natural tendency to assemble into all-pentameric structures. Therefore pre-VP2 may be required to allow formation of the hexameric structures. In terms of biological role, protease VP4 is a serine protease that cleaves the polyprotein into its final products. Pre-VP2 is first partially cleaved, and may be completely processed by VP4 upon capsid maturation. Capsid protein VP3 plays a key role in virion assembly by providing a scaffold for the capsid made of VP2. May self-assemble to form a T=4-like icosahedral inner-capsid composed of at least 180 trimers. Plays a role in genomic RNA packaging by recruiting VP1 into the capsid and interacting with the dsRNA genome segments to form a ribonucleoprotein complex. Additionally, the interaction of the VP3 C-terminal tail with VP1 removes the inherent structural blockade of the polymerase active site. Thus, VP3 can also function as a transcriptional activator. Functionally, structural peptide 1 is a small peptide derived from pre-VP2 C-terminus. It destabilizes and perforates cell membranes, suggesting a role during entry. Its function is as follows. Structural peptide 2 is a small peptide derived from pre-VP2 C-terminus. It is not essential for the virus viability, but viral growth is affected when missing. In terms of biological role, structural peptide 3 is a small peptide derived from pre-VP2 C-terminus. It is not essential for the virus viability, but viral growth is affected when missing. In Drosophila melanogaster (Fruit fly), this protein is Structural polyprotein.